A 361-amino-acid chain; its full sequence is MKNLFLFCRAGYEKECAAEIQQRAAELNVGGFVKANNNDAYVVYQCFEEDGGDTLVKQLPLDSLIFARQMFAASELLADLPESDRVSPIVAALSDVSKAGELRVETPDTNEAKELSAFCRKFTVPLRQHLKKSGSLLAQENPKRPIIHVCFIGPGRAYAGYSFSNNSSPYFMGIPRLKMAADAPSRSSLKLDEAFAQFVPKEEQEERVRSGMNAVDLGACPGGWTYQLVRRGMMVSAVDNGPMNEKLMETGQVKHFREDGFRFEPQRKNIYWLVCDMVEKPARVAELIEAWAINGWFKEAIFNLKLPMKSRYKEVMAILNTMQEILKENGINEFQLQCKHLYHDRDEVTVHLWIRPSQAWN.

S-adenosyl-L-methionine is bound by residues Ser187, 220-223 (CPGG), Asp239, Asp259, and Asp276. Residue Lys305 is the Proton acceptor of the active site.

It belongs to the class I-like SAM-binding methyltransferase superfamily. RNA methyltransferase RlmE family. RlmM subfamily. In terms of assembly, monomer.

It localises to the cytoplasm. The catalysed reaction is cytidine(2498) in 23S rRNA + S-adenosyl-L-methionine = 2'-O-methylcytidine(2498) in 23S rRNA + S-adenosyl-L-homocysteine + H(+). In terms of biological role, catalyzes the 2'-O-methylation at nucleotide C2498 in 23S rRNA. The chain is Ribosomal RNA large subunit methyltransferase M from Shewanella sp. (strain MR-4).